Here is a 208-residue protein sequence, read N- to C-terminus: Small ribosomal subunit protein uS4 (208 aa).

In terms of domain architecture, S4 RNA-binding spans 98 to 163 (RRLDNVVYRL…KPRFIEIKEK (66 aa)).

Belongs to the universal ribosomal protein uS4 family. As to quaternary structure, part of the 30S ribosomal subunit. Contacts protein S5. The interaction surface between S4 and S5 is involved in control of translational fidelity.

One of the primary rRNA binding proteins, it binds directly to 16S rRNA where it nucleates assembly of the body of the 30S subunit. Functionally, with S5 and S12 plays an important role in translational accuracy. The polypeptide is Small ribosomal subunit protein uS4 (Caldicellulosiruptor saccharolyticus (strain ATCC 43494 / DSM 8903 / Tp8T 6331)).